A 931-amino-acid chain; its full sequence is MAARWAAHGPGPGLDEFTVPAEKRRFLEGSRGRIQGLFEVRLAVLEAQGDWRPALPPPGQPPPAARIWVQLAGGGKAVRSAKEYIKGLCEPELEEKEYYPKDMHCIFVGAQNMFLNSLIQDTCADITVLEIGLLSIKGGAEAVVMAQSQVQQFVKLFENNESLSSECESDIKKQFRQFVEAHADKYTMDLLILPSSLKRELLTLMQTECCESRGAIIDLTGSKSPAELLQDKTSKVILTSRDGKMGDEEERNNAGTPVTELTKQMDNVFSDAPETSFVPINVVPPLEAMTSKERQSCKRRFSDAEESLPKKQLSLENDQEVKSVSHNDSSKRDAVIDLISDSSGELDDPSYCIKEGDDISEEIEYKILVNFFRTMGYSQSIVEKVIGVLGQSVEPLTLLEEIEKENLRFQKEQEWSSKTPKTTNLRLGSNANSSHKLEDEDISCKKNPLKTTHTSNETRTERHKARDMPSTQVDAEDKMHVSVCKPVSPDKSSAICYKKTDIYCPGKNHNSTSSDAETDGFVPLSPPQAGAPKDVDFVARGSSDVRCTSAKSKTAVHQKSAGPSPVQNSHSVVEDQLGHCSSYQVRSPNQHTSQMSNFENPTQAHVLSSEIHSANPDREVSGSHRRHIDPSITGVQRFLESLKKPYRLELKNEPGKPYLKHIIIDGSNVAISHGLRKFFSCRGIAIAVDYFWKRGHRNITVFVPQWRTRRDPSITEQDFLTQLEDVGILSLTPSRMVLGARIASHDDRFLLHLADKTGGVIVTNDNFREFVTESLAWREIIQKRLLQYTFAGDIFMVPDDPLGRNGPRLDDFLQSEGCSRDFLSAQKALQSREQYSSETPLFMHVPNPASSSQQPKNRAHGDHSAAWLPLDTNMKACLSIPPQRSASETVWLREALIKIFPDYEQRQKIDKILADHPFMRDLNALSAMVLD.

The region spanning 75 to 159 is the KH-like domain; that stretch reads GKAVRSAKEY…VQQFVKLFEN (85 aa). Disordered regions lie at residues 289-329, 413-474, and 547-571; these read MTSK…HNDS, QEWS…TQVD, and CTSAKSKTAVHQKSAGPSPVQNSHS. 2 stretches are compositionally biased toward basic and acidic residues: residues 290-309 and 319-329; these read TSKERQSCKRRFSDAEESLP and QEVKSVSHNDS. A compositionally biased stretch (polar residues) spans 416-434; sequence SSKTPKTTNLRLGSNANSS. 2 stretches are compositionally biased toward basic and acidic residues: residues 435-444 and 456-467; these read HKLEDEDISC and NETRTERHKARD. A compositionally biased stretch (polar residues) spans 547–557; the sequence is CTSAKSKTAVH. Residues 659-811 enclose the RNase NYN domain; the sequence is LKHIIIDGSN…LGRNGPRLDD (153 aa). A disordered region spans residues 841 to 863; the sequence is LFMHVPNPASSSQQPKNRAHGDH. Residues 884 to 931 are coCUN; the sequence is RSASETVWLREALIKIFPDYEQRQKIDKILADHPFMRDLNALSAMVLD.

The protein belongs to the N4BP1 family.

It is found in the cytoplasm. It localises to the cytosol. Its subcellular location is the nucleus. The protein resides in the nucleolus. The protein localises to the PML body. Functionally, potent suppressor of cytokine production that acts as a regulator of innate immune signaling and inflammation. Acts as a key negative regulator of select cytokine and chemokine responses elicited by TRIF-independent Toll-like receptors (TLRs), thereby limiting inflammatory cytokine responses to minor insults. Has ribonuclease activity. In Gallus gallus (Chicken), this protein is NEDD4-binding protein 1.